Here is a 315-residue protein sequence, read N- to C-terminus: DNA-directed RNA polymerase subunit alpha (315 aa).

Positions 1 to 228 are alpha N-terminal domain (alpha-NTD); that stretch reads MIEIEKPKIE…EHLNLFIDLS (228 aa). The tract at residues 245-315 is alpha C-terminal domain (alpha-CTD); the sequence is KEKVLEMTIE…LGLSLAPSED (71 aa).

It belongs to the RNA polymerase alpha chain family. As to quaternary structure, homodimer. The RNAP catalytic core consists of 2 alpha, 1 beta, 1 beta' and 1 omega subunit. When a sigma factor is associated with the core the holoenzyme is formed, which can initiate transcription.

It catalyses the reaction RNA(n) + a ribonucleoside 5'-triphosphate = RNA(n+1) + diphosphate. In terms of biological role, DNA-dependent RNA polymerase catalyzes the transcription of DNA into RNA using the four ribonucleoside triphosphates as substrates. In Acetivibrio thermocellus (strain ATCC 27405 / DSM 1237 / JCM 9322 / NBRC 103400 / NCIMB 10682 / NRRL B-4536 / VPI 7372) (Clostridium thermocellum), this protein is DNA-directed RNA polymerase subunit alpha.